We begin with the raw amino-acid sequence, 66 residues long: Large ribosomal subunit protein bL35 (66 aa).

This sequence belongs to the bacterial ribosomal protein bL35 family.

In Bradyrhizobium diazoefficiens (strain JCM 10833 / BCRC 13528 / IAM 13628 / NBRC 14792 / USDA 110), this protein is Large ribosomal subunit protein bL35.